We begin with the raw amino-acid sequence, 424 residues long: MNLFASASTVAICSYALLSTVYKTAQVFYTLPTNVPPTSGDPPSGEPWPSVDVIIPCYNEAPRTLSDCLASIASQDYAGKLQVYVVDDGSANRDALVGVHEEYAGDPRFNFVALPKNVGKRKAQIAAIRRSCGDLVLNVDSDTILAPDVITRLALKMQDQAVGAAMGQLAASNRSETWLTRLIDMEYWLACNEERAAQARFGAVMCCCGPCAMYRRSALVSLLDQYETQRFRGKPSDFGEDRHLTILMLKAGFRTEYVPEAVAATVVPNSMGPYLRQQLRWARSTFRDTLLAFQLLRGLNIYLTLDVIGQNIGPLLLSLSILAGLAQFVTTGTVPWTACLMIAAMTIVRCSVAAFRARQLRFLGFSLHTLINIFLLLPLKAYALCTLSNSDWLSRSSAANVQDTGDALPKPNLVGSDAAYSEQQ.

This sequence belongs to the NodC/HAS family.

It localises to the cell membrane. Its function is as follows. Involved in the synthesis of Nod factor, a sulfated N-acyl-beta-1,4-tetrasaccharide of N-acetylglucosamine which initiates a series of events in the host plant species leading eventually to nodulation. The chain is N-acetylglucosaminyltransferase (nodC) from Mesorhizobium japonicum (strain LMG 29417 / CECT 9101 / MAFF 303099) (Mesorhizobium loti (strain MAFF 303099)).